Reading from the N-terminus, the 209-residue chain is FMN-dependent NADH:quinone oxidoreductase 2 (209 aa).

Residues Ser9, 15 to 17 (SVS), and 97 to 100 (MWNF) contribute to the FMN site.

It belongs to the azoreductase type 1 family. In terms of assembly, homodimer. FMN serves as cofactor.

It carries out the reaction 2 a quinone + NADH + H(+) = 2 a 1,4-benzosemiquinone + NAD(+). The catalysed reaction is N,N-dimethyl-1,4-phenylenediamine + anthranilate + 2 NAD(+) = 2-(4-dimethylaminophenyl)diazenylbenzoate + 2 NADH + 2 H(+). Its function is as follows. Quinone reductase that provides resistance to thiol-specific stress caused by electrophilic quinones. In terms of biological role, also exhibits azoreductase activity. Catalyzes the reductive cleavage of the azo bond in aromatic azo compounds to the corresponding amines. The polypeptide is FMN-dependent NADH:quinone oxidoreductase 2 (Pseudomonas syringae pv. tomato (strain ATCC BAA-871 / DC3000)).